A 270-amino-acid polypeptide reads, in one-letter code: MNLAVEIENLTFFYPDGNKALDGVSFVIPERSKTVILGHNGAGKSTLLLHLNGLYTASRGRVKIFGKVINEENIREIRKKVGLVFQDPDDQLFASTIFDDVAFGPQNLELDKKEILRRVEEALKAVDMWDLRERPPHHLSLGQKKRAAIAGVLAMEPDIVVLDEPMAYLDPRGQEEITAILNRLNNEGKTVIVSTHDLDWALEWADYVVVLNAGRVVAEGDKSILTNRQLLEQNGLKAPLLVKLFEDFEGKLGIPTNLKEARQILRKFIF.

The ABC transporter domain occupies 5-238; that stretch reads VEIENLTFFY…QLLEQNGLKA (234 aa). 38 to 45 contributes to the ATP binding site; the sequence is GHNGAGKS.

Belongs to the ABC transporter superfamily. Energy-coupling factor EcfA family. In terms of assembly, forms a stable energy-coupling factor (ECF) transporter complex composed of 2 membrane-embedded substrate-binding proteins (S component), 2 ATP-binding proteins (A component) and 2 transmembrane proteins (T component).

It localises to the cell membrane. In terms of biological role, ATP-binding (A) component of a common energy-coupling factor (ECF) ABC-transporter complex. Unlike classic ABC transporters this ECF transporter provides the energy necessary to transport a number of different substrates. This Carboxydothermus hydrogenoformans (strain ATCC BAA-161 / DSM 6008 / Z-2901) protein is Energy-coupling factor transporter ATP-binding protein EcfA.